The primary structure comprises 245 residues: Enolase-phosphatase E1 (245 aa).

It belongs to the HAD-like hydrolase superfamily. MasA/MtnC family. Monomer. Mg(2+) serves as cofactor.

It carries out the reaction 5-methylsulfanyl-2,3-dioxopentyl phosphate + H2O = 1,2-dihydroxy-5-(methylsulfanyl)pent-1-en-3-one + phosphate. It participates in amino-acid biosynthesis; L-methionine biosynthesis via salvage pathway; L-methionine from S-methyl-5-thio-alpha-D-ribose 1-phosphate: step 3/6. Its pathway is amino-acid biosynthesis; L-methionine biosynthesis via salvage pathway; L-methionine from S-methyl-5-thio-alpha-D-ribose 1-phosphate: step 4/6. Bifunctional enzyme that catalyzes the enolization of 2,3-diketo-5-methylthiopentyl-1-phosphate (DK-MTP-1-P) into the intermediate 2-hydroxy-3-keto-5-methylthiopentenyl-1-phosphate (HK-MTPenyl-1-P), which is then dephosphorylated to form the acireductone 1,2-dihydroxy-3-keto-5-methylthiopentene (DHK-MTPene). This chain is Enolase-phosphatase E1, found in Parasynechococcus marenigrum (strain WH8102).